The primary structure comprises 369 residues: Methylthioribose-1-phosphate isomerase (369 aa).

Residues 54–56 (RGA), Arg95, and Gln208 contribute to the substrate site. The Proton donor role is filled by Asp249. 259 to 260 (NK) provides a ligand contact to substrate.

It belongs to the eIF-2B alpha/beta/delta subunits family. MtnA subfamily.

The catalysed reaction is 5-(methylsulfanyl)-alpha-D-ribose 1-phosphate = 5-(methylsulfanyl)-D-ribulose 1-phosphate. Its pathway is amino-acid biosynthesis; L-methionine biosynthesis via salvage pathway; L-methionine from S-methyl-5-thio-alpha-D-ribose 1-phosphate: step 1/6. Functionally, catalyzes the interconversion of methylthioribose-1-phosphate (MTR-1-P) into methylthioribulose-1-phosphate (MTRu-1-P). The polypeptide is Methylthioribose-1-phosphate isomerase (Desulfatibacillum aliphaticivorans).